Here is an 894-residue protein sequence, read N- to C-terminus: Phosphoenolpyruvate carboxylase (894 aa).

Residues H143 and K556 contribute to the active site.

It belongs to the PEPCase type 1 family. Requires Mg(2+) as cofactor.

The enzyme catalyses oxaloacetate + phosphate = phosphoenolpyruvate + hydrogencarbonate. In terms of biological role, forms oxaloacetate, a four-carbon dicarboxylic acid source for the tricarboxylic acid cycle. In Acinetobacter baumannii (strain ATCC 17978 / DSM 105126 / CIP 53.77 / LMG 1025 / NCDC KC755 / 5377), this protein is Phosphoenolpyruvate carboxylase.